We begin with the raw amino-acid sequence, 199 residues long: Transgelin-3 (199 aa).

Residues 24–136 (ADLENKLVDW…RTLMALGSVA (113 aa)) form the Calponin-homology (CH) domain. Serine 163 is subject to Phosphoserine. One copy of the Calponin-like repeat lies at 174 to 199 (IGLQMGSNKGASQAGMTGYGMPRQIM). Positions 176–188 (LQMGSNKGASQAG) are enriched in polar residues. A disordered region spans residues 176–199 (LQMGSNKGASQAGMTGYGMPRQIM).

Belongs to the calponin family.

This is Transgelin-3 (TAGLN3) from Pongo abelii (Sumatran orangutan).